A 293-amino-acid polypeptide reads, in one-letter code: uncharacterized protein (293 aa).

A helical transmembrane segment spans residues 55 to 77 (IVLAKEIFAVAFFSLGMSCLLMA).

Its subcellular location is the membrane. This is an uncharacterized protein from Caenorhabditis elegans.